We begin with the raw amino-acid sequence, 230 residues long: Cytochrome c oxidase subunit 2 (230 aa).

Residues 1–14 (MAHPSQLGFQDAAS) lie on the Mitochondrial intermembrane side of the membrane. A helical membrane pass occupies residues 15–45 (PVMEELLHFHDHALMIVLLISTLVLYIIVAM). Topologically, residues 46 to 59 (VSTKLTNKYILDSQ) are mitochondrial matrix. A helical membrane pass occupies residues 60–87 (EIEIVWTVLPAVILILIALPSLRILYLM). Residues 88 to 230 (DEINDPHLTI…KWSTMMLEDA (143 aa)) are Mitochondrial intermembrane-facing. His-161, Cys-196, Glu-198, Cys-200, His-204, and Met-207 together coordinate Cu cation. Glu-198 serves as a coordination point for Mg(2+).

The protein belongs to the cytochrome c oxidase subunit 2 family. In terms of assembly, component of the cytochrome c oxidase (complex IV, CIV), a multisubunit enzyme composed of 14 subunits. The complex is composed of a catalytic core of 3 subunits MT-CO1, MT-CO2 and MT-CO3, encoded in the mitochondrial DNA, and 11 supernumerary subunits COX4I, COX5A, COX5B, COX6A, COX6B, COX6C, COX7A, COX7B, COX7C, COX8 and NDUFA4, which are encoded in the nuclear genome. The complex exists as a monomer or a dimer and forms supercomplexes (SCs) in the inner mitochondrial membrane with NADH-ubiquinone oxidoreductase (complex I, CI) and ubiquinol-cytochrome c oxidoreductase (cytochrome b-c1 complex, complex III, CIII), resulting in different assemblies (supercomplex SCI(1)III(2)IV(1) and megacomplex MCI(2)III(2)IV(2)). Found in a complex with TMEM177, COA6, COX18, COX20, SCO1 and SCO2. Interacts with TMEM177 in a COX20-dependent manner. Interacts with COX20. Interacts with COX16. Requires Cu cation as cofactor.

The protein resides in the mitochondrion inner membrane. It catalyses the reaction 4 Fe(II)-[cytochrome c] + O2 + 8 H(+)(in) = 4 Fe(III)-[cytochrome c] + 2 H2O + 4 H(+)(out). In terms of biological role, component of the cytochrome c oxidase, the last enzyme in the mitochondrial electron transport chain which drives oxidative phosphorylation. The respiratory chain contains 3 multisubunit complexes succinate dehydrogenase (complex II, CII), ubiquinol-cytochrome c oxidoreductase (cytochrome b-c1 complex, complex III, CIII) and cytochrome c oxidase (complex IV, CIV), that cooperate to transfer electrons derived from NADH and succinate to molecular oxygen, creating an electrochemical gradient over the inner membrane that drives transmembrane transport and the ATP synthase. Cytochrome c oxidase is the component of the respiratory chain that catalyzes the reduction of oxygen to water. Electrons originating from reduced cytochrome c in the intermembrane space (IMS) are transferred via the dinuclear copper A center (CU(A)) of subunit 2 and heme A of subunit 1 to the active site in subunit 1, a binuclear center (BNC) formed by heme A3 and copper B (CU(B)). The BNC reduces molecular oxygen to 2 water molecules using 4 electrons from cytochrome c in the IMS and 4 protons from the mitochondrial matrix. The sequence is that of Cytochrome c oxidase subunit 2 (mt-co2) from Salmo salar (Atlantic salmon).